The primary structure comprises 468 residues: Aldehyde dehydrogenase family 3 member B1 (468 aa).

N-acetylmethionine is present on Met1. NAD(+) is bound at residue 188 to 193 (GNPQVG). Active-site residues include Glu210 and Cys244. Cys463 carries S-palmitoyl cysteine lipidation. Residue Cys465 is modified to Cysteine methyl ester. Cys465 carries the S-geranylgeranyl cysteine lipid modification. Residues 466-468 (TLL) constitute a propeptide, removed in mature form.

This sequence belongs to the aldehyde dehydrogenase family. Post-translationally, dually lipidated in the C-terminus; prenylation occurs prior to, and is a prerequisite for palmitoylation. It is also required for activity towards long-chain substrates.

Its subcellular location is the cell membrane. It carries out the reaction an aldehyde + NAD(+) + H2O = a carboxylate + NADH + 2 H(+). The catalysed reaction is a long-chain fatty aldehyde + NAD(+) + H2O = a long-chain fatty acid + NADH + 2 H(+). It catalyses the reaction a medium-chain fatty aldehyde + NAD(+) + H2O = a medium-chain fatty acid + NADH + 2 H(+). The enzyme catalyses octanal + NAD(+) + H2O = octanoate + NADH + 2 H(+). It carries out the reaction nonanal + NAD(+) + H2O = nonanoate + NADH + 2 H(+). The catalysed reaction is hexadecanoate + NADH + 2 H(+) = hexadecanal + NAD(+) + H2O. It catalyses the reaction (2E)-octenal + NAD(+) + H2O = (2E)-octenoate + NADH + 2 H(+). The enzyme catalyses (E)-non-2-enal + NAD(+) + H2O = (E)-non-2-enoate + NADH + 2 H(+). It carries out the reaction (E)-4-hydroxynon-2-enal + NAD(+) + H2O = (E)-4-hydroxynon-2-enoate + NADH + 2 H(+). The catalysed reaction is (2E)-hexadecenal + NAD(+) + H2O = (E)-hexadec-2-enoate + NADH + 2 H(+). It catalyses the reaction benzaldehyde + NAD(+) + H2O = benzoate + NADH + 2 H(+). The enzyme catalyses an aldehyde + NADP(+) + H2O = a carboxylate + NADPH + 2 H(+). It carries out the reaction a medium-chain fatty aldehyde + NADP(+) + H2O = a medium-chain fatty acid + NADPH + 2 H(+). The catalysed reaction is hexanal + NADP(+) + H2O = hexanoate + NADPH + 2 H(+). It catalyses the reaction octanal + NADP(+) + H2O = octanoate + NADPH + 2 H(+). The enzyme catalyses nonanal + NADP(+) + H2O = nonanoate + NADPH + 2 H(+). It carries out the reaction (2E)-octenal + NADP(+) + H2O = (2E)-octenoate + NADPH + 2 H(+). The catalysed reaction is (E)-non-2-enal + NADP(+) + H2O = (E)-non-2-enoate + NADPH + 2 H(+). It catalyses the reaction (E)-4-hydroxynon-2-enal + NADP(+) + H2O = (E)-4-hydroxynon-2-enoate + NADPH + 2 H(+). The enzyme catalyses benzaldehyde + NADP(+) + H2O = benzoate + NADPH + 2 H(+). It functions in the pathway alcohol metabolism; ethanol degradation; acetate from ethanol: step 2/2. Oxidizes medium and long chain saturated and unsaturated fatty aldehydes generated in the plasma membrane into non-toxic fatty acids. May have a protective role against the cytotoxicity induced by lipid peroxidation. Short-chain fatty aldehydes are not good substrates. Can use both NADP(+) and NAD(+) as electron acceptor in vitro, however in vivo preference will depend on their tissue levels. Low activity towards acetaldehyde and 3,4-dihydroxyphenylacetaldehyde. Able to metabolize aromatic aldehydes such as benzaldehyde to their acid form. This Bos taurus (Bovine) protein is Aldehyde dehydrogenase family 3 member B1 (ALDH3B1).